We begin with the raw amino-acid sequence, 364 residues long: Dihydroorotate dehydrogenase (quinone) (364 aa).

Residues 61-65 (AGFDK) and T85 contribute to the FMN site. K65 provides a ligand contact to substrate. A substrate-binding site is contributed by 110–114 (NRMGF). Residues N139 and N170 each coordinate FMN. Residue N170 participates in substrate binding. Residue S173 is the Nucleophile of the active site. Substrate is bound at residue N175. FMN-binding residues include K214 and A242. 243-244 (NT) serves as a coordination point for substrate. Residues G266, G295, and 316 to 317 (YS) each bind FMN.

This sequence belongs to the dihydroorotate dehydrogenase family. Type 2 subfamily. Monomer. Requires FMN as cofactor.

It localises to the cell membrane. It carries out the reaction (S)-dihydroorotate + a quinone = orotate + a quinol. The protein operates within pyrimidine metabolism; UMP biosynthesis via de novo pathway; orotate from (S)-dihydroorotate (quinone route): step 1/1. Its function is as follows. Catalyzes the conversion of dihydroorotate to orotate with quinone as electron acceptor. The polypeptide is Dihydroorotate dehydrogenase (quinone) (Rhodopseudomonas palustris (strain BisB5)).